Reading from the N-terminus, the 244-residue chain is Small ribosomal subunit protein eS4 (244 aa).

Positions 43–106 (LPLLLIVRDT…NENYLVLFDE (64 aa)) constitute an S4 RNA-binding domain.

It belongs to the eukaryotic ribosomal protein eS4 family.

The polypeptide is Small ribosomal subunit protein eS4 (rps4e) (Methanococcus vannielii).